The following is a 141-amino-acid chain: MNAKEILVHSLRLLENGDARGWCDLFHPEGVLEFPYAPPGWKTRFEGRETIWAHMRLFPEHLTVRFTDVQFYETADPDLAIGEFHGDGVATVSGGKLAQDYISVLRTRDGQILLYRDFWNPLRHLEALGGVEAAAKIVQGA.

This sequence belongs to the PhzA/PhzB family.

This is an uncharacterized protein from Pseudomonas aeruginosa (strain ATCC 15692 / DSM 22644 / CIP 104116 / JCM 14847 / LMG 12228 / 1C / PRS 101 / PAO1).